Reading from the N-terminus, the 181-residue chain is Oligoribonuclease (181 aa).

Residues 8–171 (LIWVDLEMTG…DDIHDSIAEL (164 aa)) enclose the Exonuclease domain. The active site involves Y129.

Belongs to the oligoribonuclease family.

The protein localises to the cytoplasm. Its function is as follows. 3'-to-5' exoribonuclease specific for small oligoribonucleotides. This Photobacterium profundum (strain SS9) protein is Oligoribonuclease.